We begin with the raw amino-acid sequence, 380 residues long: Cytochrome b (380 aa).

Helical transmembrane passes span 33–53, 77–98, 113–133, and 178–198; these read FGSL…FLAM, WLIR…YLHV, WNIG…GYVL, and FFAF…IHLL. 2 residues coordinate heme b: histidine 83 and histidine 97. 2 residues coordinate heme b: histidine 182 and histidine 196. Position 201 (histidine 201) interacts with a ubiquinone. 4 consecutive transmembrane segments (helical) span residues 226 to 246, 288 to 308, 320 to 340, and 347 to 367; these read YKDM…TLFT, LGGV…PILH, ITQM…WIGG, and FMTI…ILIP.

Belongs to the cytochrome b family. As to quaternary structure, the cytochrome bc1 complex contains 3 respiratory subunits (MT-CYB, CYC1 and UQCRFS1), 2 core proteins (UQCRC1 and UQCRC2) and probably 6 low-molecular weight proteins. Requires heme b as cofactor.

It localises to the mitochondrion inner membrane. Component of the ubiquinol-cytochrome c reductase complex (complex III or cytochrome b-c1 complex) that is part of the mitochondrial respiratory chain. The b-c1 complex mediates electron transfer from ubiquinol to cytochrome c. Contributes to the generation of a proton gradient across the mitochondrial membrane that is then used for ATP synthesis. The sequence is that of Cytochrome b (mt-cyb) from Latimeria chalumnae (Coelacanth).